The chain runs to 807 residues: Leucine--tRNA ligase (807 aa).

Residues 38 to 49 (PYPSGSGLHVGH) carry the 'HIGH' region motif. Positions 579–583 (KMSKS) match the 'KMSKS' region motif. Lys-582 is an ATP binding site.

The protein belongs to the class-I aminoacyl-tRNA synthetase family.

The protein resides in the cytoplasm. The catalysed reaction is tRNA(Leu) + L-leucine + ATP = L-leucyl-tRNA(Leu) + AMP + diphosphate. This is Leucine--tRNA ligase from Mycoplasmopsis pulmonis (strain UAB CTIP) (Mycoplasma pulmonis).